The sequence spans 29 residues: Kunitz-type trypsin inhibitor IVTI (29 aa).

This sequence belongs to the protease inhibitor I3 (leguminous Kunitz-type inhibitor) family. In terms of assembly, monomer and dimer.

In terms of biological role, inhibits bovine trypsin but not chymotrypsin. Also inhibits trypsin-like enzymes from midgut of several lepidopteran species and inhibits larval development in those species. Has fungicidal activity against yeast C.buinensis. Has a bacteriostatic effect against E.coli. Is not cytotoxic. The chain is Kunitz-type trypsin inhibitor IVTI from Inga vera (River koko).